The chain runs to 124 residues: Protein CYSTEINE-RICH TRANSMEMBRANE MODULE 10 (124 aa).

The segment at 1 to 103 (MSYQDPQHPV…PKNKKDKKDS (103 aa)) is disordered. Composition is skewed to pro residues over residues 27-40 (AGYP…PPQY) and 65-88 (GYPP…PPPH). The helical transmembrane segment at 101-118 (KDSGGFMEGCLAMLCCCV) threads the bilayer.

This sequence belongs to the CYSTM1 family. Heterodimers. Interacts with CYSTM7 and WIH1/CYSTM13. As to expression, mostly expressed in stems and,at low levels, in stems, roots, flowers, siliques and leaves.

The protein localises to the cell membrane. It localises to the cytoplasm. Functionally, involved in resistance to abiotic stress. In Arabidopsis thaliana (Mouse-ear cress), this protein is Protein CYSTEINE-RICH TRANSMEMBRANE MODULE 10.